A 237-amino-acid polypeptide reads, in one-letter code: Increased recombination centers protein 6 (237 aa).

The protein belongs to the IRC6 family.

Its function is as follows. Involved in gross chromosomal rearrangements (GCRs) and telomere healing. The sequence is that of Increased recombination centers protein 6 (IRC6) from Saccharomyces cerevisiae (strain ATCC 204508 / S288c) (Baker's yeast).